The following is a 104-amino-acid chain: MQQNQKIRIRLKAFDYRLIDQSAAEIVETAKRTGAIVKGPVPLPTRIQRFDVLRSPHVNKTSRDQFEIRTHQRLMDIVDPTDKTVDALMKLDLPAGVDVEIKLQ.

This sequence belongs to the universal ribosomal protein uS10 family. In terms of assembly, part of the 30S ribosomal subunit.

Involved in the binding of tRNA to the ribosomes. In Ralstonia nicotianae (strain ATCC BAA-1114 / GMI1000) (Ralstonia solanacearum), this protein is Small ribosomal subunit protein uS10.